A 261-amino-acid chain; its full sequence is uncharacterized protein (261 aa).

The HTH tetR-type domain occupies 15–75; that stretch reads SINPEDIISG…AMTDRALSKY (61 aa). The H-T-H motif DNA-binding region spans 38-57; it reads SMPLLGKHLGVGVTSIYWYF. The segment at 234 to 261 is disordered; sequence AAGEVAVRRPTATADAPTPGARAKAVAR. Low complexity predominate over residues 241–261; sequence RRPTATADAPTPGARAKAVAR.

This is an uncharacterized protein from Mycobacterium bovis (strain ATCC BAA-935 / AF2122/97).